We begin with the raw amino-acid sequence, 302 residues long: Acetylxylan esterase (302 aa).

A signal peptide spans 1–20 (MPSVKETLTLLLSQAFLATG). Positions 21–31 (SPVDGETVVKR) are excised as a propeptide. Position 32 is a pyrrolidone carboxylic acid (Q32). N-linked (GlcNAc...) asparagine glycosylation occurs at N94. S121 is an active-site residue. Residues 236 to 273 (QLSSGGSQPPGGGPTSTSRPTSTRTGSSPGPTQTHWGQ) are disordered. The segment at 244-266 (PPGGGPTSTSRPTSTRTGSSPGP) is linker. Low complexity predominate over residues 250 to 269 (TSTSRPTSTRTGSSPGPTQT). Residues 266–302 (PTQTHWGQCGGQGWTGPTQCESGTTCQVISQWYSQCL) form the CBM1 domain. 2 disulfide bridges follow: C274-C291 and C285-C301.

It belongs to the cutinase family. Acetylxylan esterase subfamily. In terms of assembly, monomer. In terms of processing, glycosylated.

It localises to the secreted. It carries out the reaction Deacetylation of xylans and xylo-oligosaccharides.. The protein operates within glycan degradation; xylan degradation. Inhibited by phenylmethylsulfonyl flouride. Functionally, degrades acetylated xylans by cleaving acetyl side groups from the hetero-xylan backbone. The protein is Acetylxylan esterase (axe1) of Hypocrea jecorina (Trichoderma reesei).